The primary structure comprises 261 residues: tRNA pseudouridine synthase A (261 aa).

Asp-51 (nucleophile) is an active-site residue. Residue Tyr-109 participates in substrate binding.

The protein belongs to the tRNA pseudouridine synthase TruA family. In terms of assembly, homodimer.

The enzyme catalyses uridine(38/39/40) in tRNA = pseudouridine(38/39/40) in tRNA. Functionally, formation of pseudouridine at positions 38, 39 and 40 in the anticodon stem and loop of transfer RNAs. This is tRNA pseudouridine synthase A from Psychromonas ingrahamii (strain DSM 17664 / CCUG 51855 / 37).